Reading from the N-terminus, the 101-residue chain is Protein PrgJ (101 aa).

This sequence to S.flexneri MxiI.

Functionally, required for invasion of epithelial cells. This is Protein PrgJ (prgJ) from Salmonella typhimurium (strain LT2 / SGSC1412 / ATCC 700720).